A 514-amino-acid chain; its full sequence is G-protein coupled receptor Mth (514 aa).

The signal sequence occupies residues 1–24 (MKTLLVLRISTVILVVLVIQKSYA). At 25–218 (DILECDYFDT…CLIVPSITGQ (194 aa)) the chain is on the extracellular side. 5 cysteine pairs are disulfide-bonded: cysteine 29–cysteine 83, cysteine 85–cysteine 90, cysteine 94–cysteine 188, cysteine 95–cysteine 106, and cysteine 150–cysteine 209. Asparagine 45 carries N-linked (GlcNAc...) asparagine glycosylation. N-linked (GlcNAc...) asparagine glycosylation is found at asparagine 109, asparagine 123, asparagine 170, and asparagine 198. Residues 219 to 239 (TVVMISSLICMVLTIAVYLFV) traverse the membrane as a helical segment. Residues 240–248 (KKLQNLHGK) lie on the Cytoplasmic side of the membrane. Residues 249-269 (CFICYMVCLFMGYLFLLLDLW) traverse the membrane as a helical segment. Over 270 to 278 (QISISFCKP) the chain is Extracellular. A helical membrane pass occupies residues 279–299 (AGFLGYFFVMAAFFWLSVISL). Residues 300 to 320 (HLWNTFRGSSHKANRFLFEHR) lie on the Cytoplasmic side of the membrane. Residues 321–341 (FLAYNTYAWGMAVVLTGITVL) form a helical membrane-spanning segment. Over 342–370 (ADNIVENQDWNPRVGHEGHCWIYTQAWSA) the chain is Extracellular. Residues 371 to 391 (MLYFYGPMVFLIAFNITMFIL) traverse the membrane as a helical segment. The Cytoplasmic segment spans residues 392–424 (TAKRILGVKKDIQNFAHRQERKQKLNSDKQTYT). A helical transmembrane segment spans residues 425–445 (FFLRLFIIMGLSWSLEIGSYF). Over 446 to 454 (SQSNQTWAN) the chain is Extracellular. Residue asparagine 449 is glycosylated (N-linked (GlcNAc...) asparagine). The chain crosses the membrane as a helical span at residues 455–475 (VFLVADYLNWSQGIIIFILFV). Residues 476 to 514 (LKRSTWRLLQESIRGEGEEVNNSEEEISLENTTTRNVLL) lie on the Cytoplasmic side of the membrane.

It belongs to the G-protein coupled receptor 2 family. Mth subfamily. In terms of assembly, homodimer.

Its subcellular location is the cell membrane. Its function is as follows. Involved in biological aging and stress response. Essential for adult survival. Required in the presynaptic motor neuron to up-regulate neurotransmitter exocytosis at larval glutamatergic neuromuscular junctions (NMJs). Regulates a step associated with docking and clustering of vesicles at release sites. SP/Acp70A and sun are agonists that activate mth in vitro. This is G-protein coupled receptor Mth (mth) from Drosophila melanogaster (Fruit fly).